Consider the following 119-residue polypeptide: MLLNTKQMRLRRAKATRIKIGNSRQFRLSVHKSNNHIYAQILDPSSNRVIVSASTVEAEVKKQYPSGGTIEAAKYVGHLVAKKSIESQIYEVAFDRSGFKYHGRIKALADAARSAGMKF.

Belongs to the universal ribosomal protein uL18 family. Part of the 50S ribosomal subunit; part of the 5S rRNA/L5/L18/L25 subcomplex. Contacts the 5S and 23S rRNAs.

This is one of the proteins that bind and probably mediate the attachment of the 5S RNA into the large ribosomal subunit, where it forms part of the central protuberance. This Nitrosomonas europaea (strain ATCC 19718 / CIP 103999 / KCTC 2705 / NBRC 14298) protein is Large ribosomal subunit protein uL18.